Consider the following 384-residue polypeptide: Probable RNA 3'-terminal phosphate cyclase-like protein (384 aa).

It belongs to the RNA 3'-terminal cyclase family. Type 2 subfamily. Part of the small subunit (SSU) processome, composed of more than 70 proteins and the RNA chaperone small nucleolar RNA (snoRNA) U3.

The protein resides in the nucleus. The protein localises to the nucleolus. In terms of biological role, part of the small subunit (SSU) processome, first precursor of the small eukaryotic ribosomal subunit. During the assembly of the SSU processome in the nucleolus, many ribosome biogenesis factors, an RNA chaperone and ribosomal proteins associate with the nascent pre-rRNA and work in concert to generate RNA folding, modifications, rearrangements and cleavage as well as targeted degradation of pre-ribosomal RNA by the RNA exosome. Does not have cyclase activity. In Drosophila melanogaster (Fruit fly), this protein is Probable RNA 3'-terminal phosphate cyclase-like protein (Rtc1).